The chain runs to 227 residues: 2,3-bisphosphoglycerate-dependent phosphoglycerate mutase (227 aa).

Substrate is bound by residues 7–14, 20–21, Arg-59, 86–89, Lys-97, 113–114, and 182–183; these read RHGFSEWN, TG, ERHY, RR, and GN. His-8 functions as the Tele-phosphohistidine intermediate in the catalytic mechanism. Glu-86 acts as the Proton donor/acceptor in catalysis.

The protein belongs to the phosphoglycerate mutase family. BPG-dependent PGAM subfamily. As to quaternary structure, homodimer.

It carries out the reaction (2R)-2-phosphoglycerate = (2R)-3-phosphoglycerate. The protein operates within carbohydrate degradation; glycolysis; pyruvate from D-glyceraldehyde 3-phosphate: step 3/5. Its function is as follows. Catalyzes the interconversion of 2-phosphoglycerate and 3-phosphoglycerate. This is 2,3-bisphosphoglycerate-dependent phosphoglycerate mutase from Haemophilus influenzae (strain PittGG).